A 179-amino-acid polypeptide reads, in one-letter code: MVRLQEQYQAEVKQALRDRFGYDNVMEIPRLSKVTLNMGLGEAVRDKKVLESAQAEMAEIAGQKPILTYARKSVAGFKIRDGWPIGCKVTLRRERMYEFLDRFINVAAPRIRDFRGFNPRSFDGRGNYNLGVREQLIFPEIDYEKVDAVRGMDITITTTAKTDEEGQALLEGFNFPFRK.

It belongs to the universal ribosomal protein uL5 family. In terms of assembly, part of the 50S ribosomal subunit; part of the 5S rRNA/L5/L18/L25 subcomplex. Contacts the 5S rRNA and the P site tRNA. Forms a bridge to the 30S subunit in the 70S ribosome.

Its function is as follows. This is one of the proteins that bind and probably mediate the attachment of the 5S RNA into the large ribosomal subunit, where it forms part of the central protuberance. In the 70S ribosome it contacts protein S13 of the 30S subunit (bridge B1b), connecting the 2 subunits; this bridge is implicated in subunit movement. Contacts the P site tRNA; the 5S rRNA and some of its associated proteins might help stabilize positioning of ribosome-bound tRNAs. In Alkalilimnicola ehrlichii (strain ATCC BAA-1101 / DSM 17681 / MLHE-1), this protein is Large ribosomal subunit protein uL5.